The primary structure comprises 73 residues: Probable cytochrome b-c1 complex subunit 8 (73 aa).

At Met1–Asn42 the chain is on the mitochondrial matrix side. Residues Phe43–Ala60 traverse the membrane as a helical segment. At Asn61–Tyr73 the chain is on the mitochondrial intermembrane side.

The protein belongs to the UQCRQ/QCR8 family. Component of the ubiquinol-cytochrome c oxidoreductase (cytochrome b-c1 complex, complex III, CIII), a multisubunit enzyme composed of 3 respiratory subunits cytochrome b, cytochrome c1 and Rieske protein, 2 core protein subunits, and additional low-molecular weight protein subunits. The complex exists as an obligatory dimer and forms supercomplexes (SCs) in the inner mitochondrial membrane with cytochrome c oxidase (complex IV, CIV).

The protein resides in the mitochondrion inner membrane. In terms of biological role, component of the ubiquinol-cytochrome c oxidoreductase, a multisubunit transmembrane complex that is part of the mitochondrial electron transport chain which drives oxidative phosphorylation. The respiratory chain contains 3 multisubunit complexes succinate dehydrogenase (complex II, CII), ubiquinol-cytochrome c oxidoreductase (cytochrome b-c1 complex, complex III, CIII) and cytochrome c oxidase (complex IV, CIV), that cooperate to transfer electrons derived from NADH and succinate to molecular oxygen, creating an electrochemical gradient over the inner membrane that drives transmembrane transport and the ATP synthase. The cytochrome b-c1 complex catalyzes electron transfer from ubiquinol to cytochrome c, linking this redox reaction to translocation of protons across the mitochondrial inner membrane, with protons being carried across the membrane as hydrogens on the quinol. In the process called Q cycle, 2 protons are consumed from the matrix, 4 protons are released into the intermembrane space and 2 electrons are passed to cytochrome c. The sequence is that of Probable cytochrome b-c1 complex subunit 8 from Dictyostelium discoideum (Social amoeba).